The chain runs to 435 residues: FAD-dependent monooxygenase ATEG_07662 (435 aa).

The helical transmembrane segment at 8 to 28 threads the bilayer; sequence PLDVAIIGGGIIGIMTALGLL. FAD contacts are provided by Glu38, Ala51, and Arg119. Asn191 is a glycosylation site (N-linked (GlcNAc...) asparagine). The active site involves Arg201. FAD is bound by residues Asp317 and Ala330.

Belongs to the paxM FAD-dependent monooxygenase family. FAD serves as cofactor.

It localises to the membrane. It functions in the pathway secondary metabolite biosynthesis. FAD-dependent monooxygenase; part of the cluster B that mediates the biosynthesis of azasperpyranones, members of the azaphilone family that exhibit anti-cancer activities. Azasperpyranones are synthesized by 2 clusters, A and B. Cluster A is responsible for the production of the polyhydric phenol moiety while the azaphilonoid scaffold is produced by the cluster B. The non-reducing polyketide synthase ATEG_03629 produces 5-methyl orsellinic acid, which is then reduced to 5-methyl orsellinic aldehyde by the NRPS-like protein ATEG_03630. 5-methyl orsellinic aldehyde is then first hydroxylated by the FAD-dependent monooxygenase ATEG_03635 and subsequently hydroxylated by the cytochrome P450 monooxygenase ATEG_03631 to produce the unstable polyhydric phenol precursor of azasperpyranones. On the other hand, the polyketide synthase ATEG_07659 is responsible for producing the 3,5-dimethyloctadienone moiety from acetyl-CoA, three malonyl-CoA, and two S-adenosyl methionines (SAM). The 3,5-dimethyloctadienone moiety is then loaded onto the SAT domain of ATEG_07661 and extended with four malonyl-CoA and one SAM, which leads to the formation of 2,4-dihydroxy-6-(5,7-dimethyl-2-oxo-trans-3-trans-5-nonadienyl)-3-methylbenzaldehyde (compound 8) after reductive release and aldol condensation. The FAD-dependent monooxygenase ATEG_07662 is the next enzyme in the biosynthesis sequence and hydroxylates the side chain at the benzylic position of compound 8. In Aspergillus nidulans, afoF, the ortholog of the FAD-dependent oxygenase ATEG_07660, is the key enzyme for the biosynthesis of asperfuranone by catalyzing the hydroxylation at C-8 of to prevent the formation of a six-membered ring hemiacetal intermediate and thus facilitating the formation of a five-membered ring to produce asperfuranone. In Aspergillus terreus, ATEG_07660 is probably not functional, which leads to the formation of the six-membered ring hemiacetal intermediate presperpyranone instead of asperfuranone. Finally, ATEG_03636 is involved in the condensation of the polyhydric phenol moiety produced by cluster A and the perasperpyranone precursor produced by cluster B, to yield azasperpyranone A. Further modifications of azasperpyranone A result in the production of derivatives, including azasperpyranone B to F. This Aspergillus terreus (strain NIH 2624 / FGSC A1156) protein is FAD-dependent monooxygenase ATEG_07662.